The chain runs to 464 residues: Serine carboxypeptidase-like 22 (464 aa).

Residues 1 to 22 (MARTHLLFLLFVLLSLATSSTS) form the signal peptide. Residues asparagine 52, asparagine 113, and asparagine 137 are each glycosylated (N-linked (GlcNAc...) asparagine). 3 disulfide bridges follow: cysteine 86/cysteine 346, cysteine 247/cysteine 258, and cysteine 282/cysteine 314. Serine 179 is an active-site residue. N-linked (GlcNAc...) asparagine glycans are attached at residues asparagine 290 and asparagine 335. Catalysis depends on residues aspartate 385 and histidine 437.

Belongs to the peptidase S10 family. Expression not detected.

The protein localises to the secreted. Functionally, probable carboxypeptidase. The sequence is that of Serine carboxypeptidase-like 22 (SCPL22) from Arabidopsis thaliana (Mouse-ear cress).